The primary structure comprises 465 residues: Cysteine--tRNA ligase (465 aa).

A Zn(2+)-binding site is contributed by Cys-29. The 'HIGH' region signature appears at 31 to 41 (PTVYNYIHIGN). Zn(2+) contacts are provided by Cys-209, His-234, and Glu-238. The 'KMSKS' region signature appears at 266–270 (KMSKS). Lys-269 is an ATP binding site. Ser-270 carries the phosphoserine modification.

It belongs to the class-I aminoacyl-tRNA synthetase family. Monomer. Zn(2+) serves as cofactor.

The protein resides in the cytoplasm. It catalyses the reaction tRNA(Cys) + L-cysteine + ATP = L-cysteinyl-tRNA(Cys) + AMP + diphosphate. This chain is Cysteine--tRNA ligase, found in Bacillus cytotoxicus (strain DSM 22905 / CIP 110041 / 391-98 / NVH 391-98).